Consider the following 452-residue polypeptide: Probable V-type proton ATPase subunit H (452 aa).

It belongs to the V-ATPase H subunit family. In terms of assembly, V-ATPase is a heteromultimeric enzyme composed of a peripheral catalytic V1 complex (components A to H) attached to an integral membrane V0 proton pore complex (components: a, c, c', c'' and d).

In terms of biological role, subunit of the peripheral V1 complex of vacuolar ATPase. Subunit H activates the ATPase activity of the enzyme and couples ATPase activity to proton flow. Vacuolar ATPase is responsible for acidifying a variety of intracellular compartments in eukaryotic cells, thus providing most of the energy required for transport processes in the vacuolar system. The chain is Probable V-type proton ATPase subunit H from Oryza sativa subsp. japonica (Rice).